Reading from the N-terminus, the 143-residue chain is ATP synthase subunit 9, mitochondrial (143 aa).

A mitochondrion-targeting transit peptide spans 1 to 62 (MAASRVFAQR…ARQAFAARRQ (62 aa)). Transmembrane regions (helical) follow at residues 85 to 105 (IGLG…LLAV) and 119 to 139 (AILG…VAMM).

Belongs to the ATPase C chain family. As to quaternary structure, F-type ATPases have 2 components, CF(1) - the catalytic core - and CF(0) - the membrane proton channel. CF(1) has five subunits: alpha(3), beta(3), gamma(1), delta(1), epsilon(1). CF(0) has three main subunits: a, b and c.

The protein resides in the mitochondrion membrane. Functionally, mitochondrial membrane ATP synthase (F(1)F(0) ATP synthase or Complex V) produces ATP from ADP in the presence of a proton gradient across the membrane which is generated by electron transport complexes of the respiratory chain. F-type ATPases consist of two structural domains, F(1) - containing the extramembraneous catalytic core and F(0) - containing the membrane proton channel, linked together by a central stalk and a peripheral stalk. During catalysis, ATP synthesis in the catalytic domain of F(1) is coupled via a rotary mechanism of the central stalk subunits to proton translocation. Part of the complex F(0) domain. A homomeric c-ring of probably 10 subunits is part of the complex rotary element. This is ATP synthase subunit 9, mitochondrial (atp9) from Emericella nidulans (strain FGSC A4 / ATCC 38163 / CBS 112.46 / NRRL 194 / M139) (Aspergillus nidulans).